Consider the following 248-residue polypeptide: Adenosylcobinamide-GDP ribazoletransferase (248 aa).

6 helical membrane-spanning segments follow: residues 36–56, 59–79, 113–133, 137–157, 170–190, and 199–219; these read FFLP…YLGL, FLPP…ITGG, FGTI…YSLV, CSIA…FLCL, IFIG…ALAM, and ITII…LLCL.

The protein belongs to the CobS family. Requires Mg(2+) as cofactor.

It is found in the cell membrane. The enzyme catalyses alpha-ribazole + adenosylcob(III)inamide-GDP = adenosylcob(III)alamin + GMP + H(+). It catalyses the reaction alpha-ribazole 5'-phosphate + adenosylcob(III)inamide-GDP = adenosylcob(III)alamin 5'-phosphate + GMP + H(+). It functions in the pathway cofactor biosynthesis; adenosylcobalamin biosynthesis; adenosylcobalamin from cob(II)yrinate a,c-diamide: step 7/7. Its function is as follows. Joins adenosylcobinamide-GDP and alpha-ribazole to generate adenosylcobalamin (Ado-cobalamin). Also synthesizes adenosylcobalamin 5'-phosphate from adenosylcobinamide-GDP and alpha-ribazole 5'-phosphate. The sequence is that of Adenosylcobinamide-GDP ribazoletransferase from Clostridium botulinum (strain 657 / Type Ba4).